Reading from the N-terminus, the 248-residue chain is Homeobox protein CHOX-CAD (248 aa).

Positions 137–196 (KDKYRVVYTDHQRLELEKEFHYSRYITIRRKAELAAALGLTERQVKIWFQNRRAKERKVN) form a DNA-binding region, homeobox. The disordered stretch occupies residues 192-248 (ERKVNKKKLQQQSQPTSTTTPTPPAVGTPGPMGTLCSGSAPSLVSSSPLTIKEEFMP). Low complexity-rich tracts occupy residues 201-211 (QQQSQPTSTTT) and 228-240 (SGSA…SSPL).

It belongs to the Caudal homeobox family.

It localises to the nucleus. Its function is as follows. May play an important role during the early steps of organogenesis. This is Homeobox protein CHOX-CAD (CHOX-CAD1) from Gallus gallus (Chicken).